A 65-amino-acid polypeptide reads, in one-letter code: MDWLSKYWWILVLVFLVGVLLNVIKDLKRVDHKKFLANKPELPPHRDFNDKWDDDDNWPKKDQKK.

Residues 4-24 (LSKYWWILVLVFLVGVLLNVI) form a helical membrane-spanning segment. The disordered stretch occupies residues 39 to 65 (KPELPPHRDFNDKWDDDDNWPKKDQKK). A compositionally biased stretch (basic and acidic residues) spans 42–65 (LPPHRDFNDKWDDDDNWPKKDQKK).

Belongs to the UPF0370 family.

The protein localises to the cell membrane. The sequence is that of UPF0370 protein Ent638_2968 from Enterobacter sp. (strain 638).